Consider the following 372-residue polypeptide: Ligninase LG6 (372 aa).

Positions methionine 1–glycine 21 are cleaved as a signal peptide. A propeptide spanning residues alanine 22 to arginine 28 is cleaved from the precursor. 2 cysteine pairs are disulfide-bonded: cysteine 31-cysteine 43 and cysteine 62-cysteine 148. Histidine 75 (proton acceptor) is an active-site residue. The Ca(2+) site is built by aspartate 76, glycine 94, aspartate 96, and serine 98. Histidine 204 provides a ligand contact to heme b. Ca(2+)-binding residues include serine 205, aspartate 222, threonine 224, valine 227, and aspartate 229. A disulfide bridge connects residues cysteine 277 and cysteine 345. The N-linked (GlcNAc...) asparagine glycan is linked to asparagine 285. Low complexity predominate over residues threonine 352–threonine 361. The disordered stretch occupies residues threonine 352–alanine 372.

It belongs to the peroxidase family. Ligninase subfamily. It depends on heme b as a cofactor. Requires Ca(2+) as cofactor.

It catalyses the reaction 1-(3,4-dimethoxyphenyl)-2-(2-methoxyphenoxy)propane-1,3-diol + H2O2 = 3,4-dimethoxybenzaldehyde + guaiacol + glycolaldehyde + H2O. The enzyme catalyses 2 (3,4-dimethoxyphenyl)methanol + H2O2 = 2 (3,4-dimethoxyphenyl)methanol radical + 2 H2O. It participates in secondary metabolite metabolism; lignin degradation. Functionally, depolymerization of lignin. Catalyzes the C(alpha)-C(beta) cleavage of the propyl side chains of lignin. The chain is Ligninase LG6 (GLG6) from Phanerodontia chrysosporium (White-rot fungus).